The chain runs to 665 residues: UvrABC system protein C (665 aa).

One can recognise a GIY-YIG domain in the interval 16–95 (ESPGVYRFRD…IKQYDPRFNV (80 aa)). In terms of domain architecture, UVR spans 208 to 243 (DLMVRRLEREMADASAELEFERAARLRDDLAALRRA). The tract at residues 470 to 507 (EAGVESAGDPATPAGPASTGPGVPDEPRVGTLVDPTTG) is disordered. Low complexity predominate over residues 475–491 (SAGDPATPAGPASTGPG).

This sequence belongs to the UvrC family. Interacts with UvrB in an incision complex.

The protein localises to the cytoplasm. Functionally, the UvrABC repair system catalyzes the recognition and processing of DNA lesions. UvrC both incises the 5' and 3' sides of the lesion. The N-terminal half is responsible for the 3' incision and the C-terminal half is responsible for the 5' incision. The polypeptide is UvrABC system protein C (Salinispora tropica (strain ATCC BAA-916 / DSM 44818 / JCM 13857 / NBRC 105044 / CNB-440)).